Here is an 85-residue protein sequence, read N- to C-terminus: UPF0386 protein RL2079 (85 aa).

The protein belongs to the UPF0386 family.

In Rhizobium johnstonii (strain DSM 114642 / LMG 32736 / 3841) (Rhizobium leguminosarum bv. viciae), this protein is UPF0386 protein RL2079.